An 859-amino-acid polypeptide reads, in one-letter code: Leucine--tRNA ligase (859 aa).

The 'HIGH' region signature appears at 42 to 52 (PYPSGRLHMGH). Residues 618 to 622 (KMSKS) carry the 'KMSKS' region motif. Lys-621 contacts ATP.

Belongs to the class-I aminoacyl-tRNA synthetase family.

Its subcellular location is the cytoplasm. The enzyme catalyses tRNA(Leu) + L-leucine + ATP = L-leucyl-tRNA(Leu) + AMP + diphosphate. In Shewanella baltica (strain OS155 / ATCC BAA-1091), this protein is Leucine--tRNA ligase.